Consider the following 337-residue polypeptide: Alcohol dehydrogenase 1 (337 aa).

Zn(2+) is bound by residues cysteine 37, histidine 58, cysteine 89, cysteine 92, cysteine 95, cysteine 103, and cysteine 145.

It belongs to the zinc-containing alcohol dehydrogenase family. In terms of assembly, multimeric (with different ratios of monomers). The cofactor is Zn(2+).

The enzyme catalyses a primary alcohol + NAD(+) = an aldehyde + NADH + H(+). The catalysed reaction is a secondary alcohol + NAD(+) = a ketone + NADH + H(+). It participates in alcohol metabolism; ethanol biosynthesis via fermentation pathway. Its activity is regulated as follows. Inhibited by ethanol. In Zymomonas mobilis subsp. mobilis (strain ATCC 31821 / ZM4 / CP4), this protein is Alcohol dehydrogenase 1 (adhA).